The chain runs to 212 residues: MLFFVDTANIADIKEAHELGILAGVTTNPSLVAKEKDVSFHDRLREITDVVSGSVSAEVISLKAEEMIEEGKELAAIAPNITVKIPMTTDGLKAVKALTDLGIKTNVTLIFSANQALLAARAGATYVSPFLGRLDDIGQNGLDLISEVKTIFDVHGLDTQIIAASIRHPQHVTEAALRGAHIGTMPLKVIKQLTKHPLTDAGIEQFLADWNK.

K84 (schiff-base intermediate with substrate) is an active-site residue.

It belongs to the transaldolase family. Type 3B subfamily.

The protein resides in the cytoplasm. The catalysed reaction is D-sedoheptulose 7-phosphate + D-glyceraldehyde 3-phosphate = D-erythrose 4-phosphate + beta-D-fructose 6-phosphate. It functions in the pathway carbohydrate degradation; pentose phosphate pathway; D-glyceraldehyde 3-phosphate and beta-D-fructose 6-phosphate from D-ribose 5-phosphate and D-xylulose 5-phosphate (non-oxidative stage): step 2/3. Its function is as follows. Transaldolase is important for the balance of metabolites in the pentose-phosphate pathway. The protein is Probable transaldolase of Bacillus pumilus (strain SAFR-032).